The chain runs to 264 residues: Glutamate racemase (264 aa).

Substrate-binding positions include Asp-10–Ser-11 and Tyr-42–Gly-43. Cys-73 acts as the Proton donor/acceptor in catalysis. Substrate is bound at residue Asn-74–Thr-75. Residue Cys-183 is the Proton donor/acceptor of the active site. Thr-184 to His-185 lines the substrate pocket.

The protein belongs to the aspartate/glutamate racemases family.

The catalysed reaction is L-glutamate = D-glutamate. The protein operates within cell wall biogenesis; peptidoglycan biosynthesis. In terms of biological role, provides the (R)-glutamate required for cell wall biosynthesis. The sequence is that of Glutamate racemase from Streptococcus agalactiae serotype III (strain NEM316).